The chain runs to 94 residues: Probable Fe(2+)-trafficking protein (94 aa).

This sequence belongs to the Fe(2+)-trafficking protein family.

In terms of biological role, could be a mediator in iron transactions between iron acquisition and iron-requiring processes, such as synthesis and/or repair of Fe-S clusters in biosynthetic enzymes. The protein is Probable Fe(2+)-trafficking protein of Haemophilus ducreyi (strain 35000HP / ATCC 700724).